A 912-amino-acid polypeptide reads, in one-letter code: Nonsense-mediated mRNA decay factor SMG8 (912 aa).

Positions 565–630 are disordered; sequence EHSNRTPDAS…GEDEDETLEQ (66 aa). A compositionally biased stretch (polar residues) spans 570-602; sequence TPDASTHPPMTNENSPHLSGSQKSQDSASNLTF. The span at 604–614 shows a compositional bias: basic and acidic residues; it reads MDEKRDEENKS.

The protein belongs to the SMG8 family.

Its function is as follows. Involved in nonsense-mediated decay (NMD) of mRNAs containing premature stop codons. Probable component of kinase complex containing SMG1 and recruited to stalled ribosomes. The chain is Nonsense-mediated mRNA decay factor SMG8 from Culex quinquefasciatus (Southern house mosquito).